A 621-amino-acid polypeptide reads, in one-letter code: Glutathione-regulated potassium-efflux system protein KefC (621 aa).

The next 12 helical transmembrane spans lie at 4–24 (HTLI…PVAV), 26–46 (LGLG…PWGF), 54–74 (SILH…GLEL), 90–110 (GALQ…LLGM), 114–134 (VAEL…MQAM), 151–171 (VLLF…LLAV), 178–198 (LGAF…VILL), 218–238 (VFSA…EEAG), 270–290 (GLLL…GTLV), 294–314 (LRIL…LWLI), 327–347 (WFAV…GAAQ), and 359–379 (ALTL…VLLT). The 120-residue stretch at 399 to 518 (QPRVIIAGFG…AGVETPERET (120 aa)) folds into the RCK N-terminal domain. The interval 591–621 (LSLTQRHGWQGTEEGKHTGDPRDEPESKPTV) is disordered. Basic and acidic residues predominate over residues 603–621 (EEGKHTGDPRDEPESKPTV).

This sequence belongs to the monovalent cation:proton antiporter 2 (CPA2) transporter (TC 2.A.37) family. KefC subfamily. Homodimer. Interacts with the regulatory subunit KefF.

It localises to the cell inner membrane. Its function is as follows. Pore-forming subunit of a potassium efflux system that confers protection against electrophiles. Catalyzes K(+)/H(+) antiport. This is Glutathione-regulated potassium-efflux system protein KefC from Enterobacter sp. (strain 638).